A 567-amino-acid chain; its full sequence is Asparagine--tRNA ligase, chloroplastic/mitochondrial (567 aa).

Residues 113–191 constitute a DNA-binding region (OB); that stretch reads NIMGWVRTLR…VELKVEKIIV (79 aa).

It belongs to the class-II aminoacyl-tRNA synthetase family.

The protein resides in the plastid. The protein localises to the chloroplast. It is found in the mitochondrion. It carries out the reaction tRNA(Asn) + L-asparagine + ATP = L-asparaginyl-tRNA(Asn) + AMP + diphosphate + H(+). The protein is Asparagine--tRNA ligase, chloroplastic/mitochondrial of Arabidopsis thaliana (Mouse-ear cress).